The following is a 256-amino-acid chain: Mannose-specific lectin 1 (256 aa).

An N-terminal signal peptide occupies residues 1–23 (MAKLLLFLLPAILGLLVPRSAVA). Bulb-type lectin domains lie at 26-131 (TNYL…PWVR) and 145-252 (NNLL…SKRS). Beta-D-mannose contacts are provided by residues 51–55 (QDDCN), Tyr-59, Trp-63, Gln-64, 170–174 (QGDCN), Tyr-178, and 182–185 (YGWQ). A Carbohydrate-binding motif 1 motif is present at residues 51-59 (QDDCNLVLY). Disulfide bonds link Cys-54–Cys-74 and Cys-173–Cys-195. Residues 170–178 (QGDCNLVLY) carry the Carbohydrate-binding motif 2 motif.

In terms of assembly, forms heterodimers.

Its subcellular location is the secreted. In terms of biological role, mannose-specific lectin. Shows agglutinating activity towards erythrocytes from rabbit. The protein is Mannose-specific lectin 1 of Remusatia vivipara (Hitchhiker elephant ear).